Consider the following 1076-residue polypeptide: Inositol-1,4,5-trisphosphate 5-phosphatase 1 (1076 aa).

The SAC domain occupies 144–474 (LRKLLTNGSF…GDALARIYTG (331 aa)). The interval 534 to 880 (YDPIHEYVNH…QEVRDASQTS (347 aa)) is catalytic. Disordered stretches follow at residues 930 to 958 (AAPP…DWIS) and 977 to 1076 (LSPA…KPLV). Low complexity-rich tracts occupy residues 977–1004 (LSPA…IKPN) and 1025–1040 (SGSS…LTPV). The span at 1065–1076 (PEESSISWKPLV) shows a compositional bias: polar residues.

The protein belongs to the synaptojanin family. This sequence in the central section; belongs to the inositol 1,4,5-trisphosphate 5-phosphatase family. Requires Mg(2+) as cofactor.

It localises to the cytoplasm. The enzyme catalyses a 1,2-diacyl-sn-glycero-3-phospho-(1D-myo-inositol-4,5-bisphosphate) + H2O = a 1,2-diacyl-sn-glycero-3-phospho-(1D-myo-inositol 4-phosphate) + phosphate. In terms of biological role, controls the cellular levels and subcellular distribution of phosphatidylinositol 3-phosphate and phosphatidylinositol 4,5-bisphosphate. Involved in distinct membrane trafficking and signal transduction pathways. Highly active against a range of soluble and lipid inositol phosphates. Active in dephosphorylating the 5-position of Ins(1,4,5)P3 and Ins(1,3,4,5)P4 and to a lesser extent Ins(1,4,5,6)P4. The enzyme is also active against PI(4,5)P2 presented in sonicated vesicles and Triton mixed micelles, and somewhat less active against PI(3,5)P2 in unilamellar vesicles. Activity against PI(3,5)P2 drops sharply when this substrate is presented in mixed micelles. Also hydrolyzes PIP3 to produce PI(3,4)P2. The chain is Inositol-1,4,5-trisphosphate 5-phosphatase 1 (syj1) from Schizosaccharomyces pombe (strain 972 / ATCC 24843) (Fission yeast).